Reading from the N-terminus, the 505-residue chain is DEAD-box ATP-dependent RNA helicase 38 (505 aa).

The segment at 1-81 (MADGGKPPTP…DQGPPLLDDS (81 aa)) is disordered. Low complexity predominate over residues 27–44 (KAAAAAEAASSSSSNEPA). Positions 100–129 (AAFEDLKLTPELLKGLHDEMGFSRPSKIQA) match the Q motif motif. The region spanning 134–310 (MILTPPYKDL…TRVIKDGNQI (177 aa)) is the Helicase ATP-binding domain. 147-154 (AHNGSGKT) provides a ligand contact to ATP. A DEAD box motif is present at residues 254–257 (DEAD). Residues 338–493 (VIKDKIFEFG…EVRNWQSEED (156 aa)) form the Helicase C-terminal domain.

Belongs to the DEAD box helicase family. DDX19/DBP5 subfamily.

The protein localises to the cytoplasm. Its subcellular location is the nucleus. It carries out the reaction ATP + H2O = ADP + phosphate + H(+). In terms of biological role, ATP-dependent RNA helicase essential for mRNA export from the nucleus. Plays an important role in the positive regulation of CBF/DREB transcription factors. This is DEAD-box ATP-dependent RNA helicase 38 from Oryza sativa subsp. japonica (Rice).